The sequence spans 834 residues: Leucine--tRNA ligase (834 aa).

The short motif at 42–52 (PYPSGKLHMGH) is the 'HIGH' region element. The 'KMSKS' region motif lies at 619-623 (KMSKS). Lys-622 provides a ligand contact to ATP.

The protein belongs to the class-I aminoacyl-tRNA synthetase family.

Its subcellular location is the cytoplasm. It carries out the reaction tRNA(Leu) + L-leucine + ATP = L-leucyl-tRNA(Leu) + AMP + diphosphate. The chain is Leucine--tRNA ligase from Actinobacillus pleuropneumoniae serotype 7 (strain AP76).